A 560-amino-acid polypeptide reads, in one-letter code: MAGPQPLALQLEQLLNPRPSEADPEADPEEATAARVIDRFDEGEDGEGDFLVVGSIRKLASASLLDTDKRYCGKTTSRKAWNEDHWEQTLPGSSDEEISDEEGSGDEDSEGLGLEEYDEDDLGAAEEQECGDHRESKKSRSHSAKTPGFSVQSISDFEKFTKGMDDLGSSEEEEDEESGMEEGDDAEDSQGESEEDRAGDRNSEDDGVVMTFSSVKVSEEVEKGRAVKNQIALWDQLLEGRIKLQKALLTTNQLPQPDVFPLFKDKGGPEFSSALKNSHKALKALLRSLVGLQEELLFQYPDTRYLVDGTKPNAGSEEISSEDDELVEEKKQQRRRVPAKRKLEMEDYPSFMAKRFADFTVYRNRTLQKWHDKTKLASGKLGKGFGAFERSILTQIDHILMDKERLLRRTQTKRSVYRVLGKPEPAAQPVPESLPGEPEILPQAPANAHLKDLDEEIFDDDDFYHQLLRELIERKTSSLDPNDQVAMGRQWLAIQKLRSKIHKKVDRKASKGRKLRFHVLSKLLSFMAPIDHTTMNDDARTELYRSLFGQLHPPDEGHGD.

A2 is subject to N-acetylalanine. Residues S61 and S63 each carry the phosphoserine modification. A disordered region spans residues 76 to 208; that stretch reads TSRKAWNEDH…GDRNSEDDGV (133 aa). The span at 94-129 shows a compositional bias: acidic residues; the sequence is SDEEISDEEGSGDEDSEGLGLEEYDEDDLGAAEEQE. Residues S150 and S155 each carry the phosphoserine modification. Basic and acidic residues predominate over residues 156 to 165; that stretch reads DFEKFTKGMD. Positions 168 to 195 are enriched in acidic residues; sequence GSSEEEEDEESGMEEGDDAEDSQGESEE. Phosphoserine is present on residues S203, S273, S316, S320, and S321. Positions 273 to 315 are POLR2J binding; sequence SALKNSHKALKALLRSLVGLQEELLFQYPDTRYLVDGTKPNAG. The interval 309-333 is disordered; sequence GTKPNAGSEEISSEDDELVEEKKQQ. Positions 316-372 are RB1 binding; that stretch reads SEEISSEDDELVEEKKQQRRRVPAKRKLEMEDYPSFMAKRFADFTVYRNRTLQKWHD. Residues 373–472 are RB1 and SP1 binding; sequence KTKLASGKLG…FYHQLLRELI (100 aa).

Belongs to the AATF family. In terms of assembly, part of the small subunit (SSU) processome, composed of more than 70 proteins and the RNA chaperone small nucleolar RNA (snoRNA) U3. Interacts with POLR2J, RB1/RB, RBL1/P107 and RBL2/P130. Interacts with PAWR and SP1. May also bind MAPT. In terms of processing, hyperphosphorylated during the G1/S phase transition. In terms of tissue distribution, ubiquitously expressed. Expressed at high levels in brain, heart, kidney, placenta and thymus.

It is found in the nucleus. The protein localises to the nucleolus. In terms of biological role, part of the small subunit (SSU) processome, first precursor of the small eukaryotic ribosomal subunit. During the assembly of the SSU processome in the nucleolus, many ribosome biogenesis factors, an RNA chaperone and ribosomal proteins associate with the nascent pre-rRNA and work in concert to generate RNA folding, modifications, rearrangements and cleavage as well as targeted degradation of pre-ribosomal RNA by the RNA exosome. May function as a general inhibitor of the histone deacetylase HDAC1. Binding to the pocket region of RB1 may displace HDAC1 from RB1/E2F complexes, leading to activation of E2F target genes and cell cycle progression. Conversely, displacement of HDAC1 from SP1 bound to the CDKN1A promoter leads to increased expression of this CDK inhibitor and blocks cell cycle progression. Also antagonizes PAWR mediated induction of aberrant amyloid peptide production in Alzheimer disease (presenile and senile dementia), although the molecular basis for this phenomenon has not been described to date. In Homo sapiens (Human), this protein is Protein AATF.